A 284-amino-acid polypeptide reads, in one-letter code: NAD kinase (284 aa).

Aspartate 70 serves as the catalytic Proton acceptor. NAD(+)-binding positions include 70–71 (DG), 139–140 (NE), lysine 167, aspartate 169, leucine 177, 180–185 (TAYNLS), and glutamine 236.

It belongs to the NAD kinase family. A divalent metal cation serves as cofactor.

The protein resides in the cytoplasm. The enzyme catalyses NAD(+) + ATP = ADP + NADP(+) + H(+). Involved in the regulation of the intracellular balance of NAD and NADP, and is a key enzyme in the biosynthesis of NADP. Catalyzes specifically the phosphorylation on 2'-hydroxyl of the adenosine moiety of NAD to yield NADP. This chain is NAD kinase, found in Helicobacter pylori (strain Shi470).